The sequence spans 390 residues: MKLDHWQKTLDHLRDEEMLRGLKTVSGAQRDHVLLDGKDVLLLCSNNYLGLADHPALIEATCRATRDCGTGTGASRLVSGSMALHEELESKLAQFKGTQRALLFNAGYAANTGILQGLMGADDVIFSDSLNHASIIDGCRLSRAKTVVYPHRDTHALERLMAKEAPLRKGQWLIVTDGVFSMDGDLAPLPELVALKKRYDCLLMVDDAHGTGVLGDSGKGTGEYLGCLTDIDLHMGTLGKALGGFGAFVAGPDVVVQFLINRARSFIFSTSLPPGVVAAGIAALDIVNGSEGRQRRMNLQKLCTLFTGQLTESLPPEVRGETPIVPILTGDPEPTMRASAWLEAQGIFVQGIRPPTVPQGRCRLRATLMATHQVEDLLRAADLIRKVLSA.

Arg20 contributes to the substrate binding site. Residue 107–108 participates in pyridoxal 5'-phosphate binding; that stretch reads GY. A substrate-binding site is contributed by His132. Pyridoxal 5'-phosphate contacts are provided by residues Ser181, 206–209, and 237–240; these read DDAH and TLGK. At Lys240 the chain carries N6-(pyridoxal phosphate)lysine. A substrate-binding site is contributed by Thr356.

It belongs to the class-II pyridoxal-phosphate-dependent aminotransferase family. BioF subfamily. Homodimer. Requires pyridoxal 5'-phosphate as cofactor.

The enzyme catalyses 6-carboxyhexanoyl-[ACP] + L-alanine + H(+) = (8S)-8-amino-7-oxononanoate + holo-[ACP] + CO2. It participates in cofactor biosynthesis; biotin biosynthesis. Its function is as follows. Catalyzes the decarboxylative condensation of pimeloyl-[acyl-carrier protein] and L-alanine to produce 8-amino-7-oxononanoate (AON), [acyl-carrier protein], and carbon dioxide. The sequence is that of Putative 8-amino-7-oxononanoate synthase (bioF) from Syntrophotalea carbinolica (strain DSM 2380 / NBRC 103641 / GraBd1) (Pelobacter carbinolicus).